The sequence spans 177 residues: Peptide methionine sulfoxide reductase MsrA (177 aa).

Residue cysteine 15 is part of the active site.

It belongs to the MsrA Met sulfoxide reductase family.

It catalyses the reaction L-methionyl-[protein] + [thioredoxin]-disulfide + H2O = L-methionyl-(S)-S-oxide-[protein] + [thioredoxin]-dithiol. The enzyme catalyses [thioredoxin]-disulfide + L-methionine + H2O = L-methionine (S)-S-oxide + [thioredoxin]-dithiol. In terms of biological role, has an important function as a repair enzyme for proteins that have been inactivated by oxidation. Catalyzes the reversible oxidation-reduction of methionine sulfoxide in proteins to methionine. The polypeptide is Peptide methionine sulfoxide reductase MsrA (Listeria monocytogenes serotype 4b (strain CLIP80459)).